The sequence spans 598 residues: NADH-quinone oxidoreductase subunit C/D (598 aa).

The segment at 1–190 (MSIFTQEVSA…EAFSLDDERL (190 aa)) is NADH dehydrogenase I subunit C. Residues 214–598 (DYLFLNLGPN…IDFVMADVDR (385 aa)) are NADH dehydrogenase I subunit D.

It in the N-terminal section; belongs to the complex I 30 kDa subunit family. In the C-terminal section; belongs to the complex I 49 kDa subunit family. In terms of assembly, NDH-1 is composed of 13 different subunits. Subunits NuoB, CD, E, F, and G constitute the peripheral sector of the complex.

Its subcellular location is the cell inner membrane. It catalyses the reaction a quinone + NADH + 5 H(+)(in) = a quinol + NAD(+) + 4 H(+)(out). NDH-1 shuttles electrons from NADH, via FMN and iron-sulfur (Fe-S) centers, to quinones in the respiratory chain. The immediate electron acceptor for the enzyme in this species is believed to be ubiquinone. Couples the redox reaction to proton translocation (for every two electrons transferred, four hydrogen ions are translocated across the cytoplasmic membrane), and thus conserves the redox energy in a proton gradient. This chain is NADH-quinone oxidoreductase subunit C/D, found in Shewanella woodyi (strain ATCC 51908 / MS32).